The chain runs to 435 residues: D-inositol 3-phosphate glycosyltransferase (435 aa).

His-25 lines the 1D-myo-inositol 3-phosphate pocket. Residues 31–32 and Gly-39 each bind UDP-N-acetyl-alpha-D-glucosamine; that span reads QP. 1D-myo-inositol 3-phosphate is bound by residues 36 to 41, Lys-94, Tyr-127, Thr-151, and Arg-171; that span reads DAGGMN. The UDP-N-acetyl-alpha-D-glucosamine site is built by Arg-245 and Lys-250. Mg(2+)-binding residues include Tyr-320, Arg-321, and Ala-323. Residues Glu-333 and Glu-341 each contribute to the UDP-N-acetyl-alpha-D-glucosamine site. Position 347 (Thr-347) interacts with Mg(2+).

The protein belongs to the glycosyltransferase group 1 family. MshA subfamily. Homodimer.

It catalyses the reaction 1D-myo-inositol 3-phosphate + UDP-N-acetyl-alpha-D-glucosamine = 1D-myo-inositol 2-acetamido-2-deoxy-alpha-D-glucopyranoside 3-phosphate + UDP + H(+). In terms of biological role, catalyzes the transfer of a N-acetyl-glucosamine moiety to 1D-myo-inositol 3-phosphate to produce 1D-myo-inositol 2-acetamido-2-deoxy-glucopyranoside 3-phosphate in the mycothiol biosynthesis pathway. This chain is D-inositol 3-phosphate glycosyltransferase, found in Streptosporangium roseum (strain ATCC 12428 / DSM 43021 / JCM 3005 / KCTC 9067 / NCIMB 10171 / NRRL 2505 / NI 9100).